We begin with the raw amino-acid sequence, 470 residues long: 4-O-methyltransferase 1 (470 aa).

S-adenosyl-L-methionine-binding positions include 274–275, D297, 328–329, and K344; these read GG and DC. H348 (proton acceptor) is an active-site residue.

The protein belongs to the class I-like SAM-binding methyltransferase superfamily. Cation-independent O-methyltransferase family. COMT subfamily.

S-adenosyl-L-methionine-dependent methyltransferase that preferentially catalyzes the methylation of 4-OH phenolic compounds like coniferyl alcohol, vanillyl alcohol and ferrulic acid. May play a role in promoting lignin degradation by methylating and inactivating free-hydroxyl phenolic compounds, products of lignin cleavage which are known inhibitors of lignin peroxidases. The protein is 4-O-methyltransferase 1 of Phanerochaete chrysosporium (strain RP-78 / ATCC MYA-4764 / FGSC 9002) (White-rot fungus).